The primary structure comprises 278 residues: MGKEKWCYINSGQCSPAFNMALDECLLNWQSEKKMPPTIRFYEWEVPTLTVGYFQRVEKDINMDVVNEKKYGFVRRQTGGRGVLHDKELTYSVIVSEDHPNMPKTVTEAYRVISQGLLDGFKALGLEAYYAVPKTEADRENLKNPRSGVCFDAPSWYEIVVEGRKIAGSAQTRQKGVILQHGSIPLEIDLDELYDLFLFPNERVKERMKSMFSSKAVAINELTDRTFTIEQLIKAFEVGFEKGLDVELVPYELTEEQLHEVQTLAKEKYESNEWNYKK.

The BPL/LPL catalytic domain occupies 33–248; the sequence is KKMPPTIRFY…GFEKGLDVEL (216 aa). The Acyl-thioester intermediate role is filled by Cys-150.

This sequence belongs to the octanoyltransferase LipM family. As to quaternary structure, monomer.

It carries out the reaction octanoyl-[ACP] + L-lysyl-[protein] = N(6)-octanoyl-L-lysyl-[protein] + holo-[ACP] + H(+). It participates in protein modification; protein lipoylation via endogenous pathway; protein N(6)-(lipoyl)lysine from octanoyl-[acyl-carrier-protein]. Functionally, catalyzes the transfer of endogenously produced octanoic acid from octanoyl-acyl-carrier-protein onto the lipoyl domain of GcvH, an intermediate carrier during protein lipoylation. The sequence is that of Octanoyltransferase LipM from Bacillus cereus (strain ATCC 14579 / DSM 31 / CCUG 7414 / JCM 2152 / NBRC 15305 / NCIMB 9373 / NCTC 2599 / NRRL B-3711).